Consider the following 702-residue polypeptide: Phosphatase and actin regulator 4 (702 aa).

Disordered stretches follow at residues 1–37, 72–194, and 222–363; these read MEDP…KSKF, RKPR…SSGG, and NLSV…PFPA. Residues 63-88 form an RPEL 1 repeat; it reads EVLERKISMRKPREELVKRGVLLEDP. Residues 72 to 84 are compositionally biased toward basic and acidic residues; sequence RKPREELVKRGVL. The segment covering 106-120 has biased composition (polar residues); the sequence is GHTTPIGNARSSSPV. Residues serine 116, serine 118, serine 131, and serine 147 each carry the phosphoserine modification. A compositionally biased stretch (polar residues) spans 147–156; the sequence is STGSQPNSEA. Residues 163 to 173 are compositionally biased toward pro residues; the sequence is VPKPPLLPPKR. Residues 233–250 are compositionally biased toward low complexity; sequence TLPAAPASTNTTATPSLT. A phosphoserine mark is found at serine 270 and serine 291. The segment covering 301-318 has biased composition (polar residues); sequence PSTSVPTLESAAAITTKT. Serine 342 and serine 344 each carry phosphoserine. Residues 342-362 show a composition bias toward pro residues; the sequence is SPSPPLPTHIPPEPPRTPPFP. Threonine 358 bears the Phosphothreonine mark. Serine 427 bears the Phosphoserine mark. A Phosphothreonine modification is found at threonine 432. Phosphoserine is present on residues serine 443, serine 453, and serine 464. The interval 469–536 is disordered; it reads IEMLKVPDDE…EEDEDESYQS (68 aa). Over residues 484–497 the composition is skewed to polar residues; the sequence is TCPSTFSEEMTPTS. Residues 508 to 518 are compositionally biased toward acidic residues; that stretch reads EEEEKESDSDS. Phosphoserine occurs at positions 514, 516, 557, and 590. 2 RPEL repeats span residues 583–608 and 621–646; these read NTLI…QPKN and RRLT…RFNE. A disordered region spans residues 592-615; it reads RPTPEELEQRNILQPKNEADRQAE. Phosphoserine is present on serine 628.

The protein belongs to the phosphatase and actin regulator family. As to quaternary structure, binds PPP1CA and actin.

Its subcellular location is the cytoplasm. The protein resides in the cell projection. It is found in the lamellipodium. Functionally, regulator of protein phosphatase 1 (PP1) required for neural tube and optic fissure closure, and enteric neural crest cell (ENCCs) migration during development. Acts as an activator of PP1 by interacting with PPP1CA and preventing phosphorylation of PPP1CA at 'Thr-320'. During neural tube closure, localizes to the ventral neural tube and activates PP1, leading to down-regulate cell proliferation within cranial neural tissue and the neural retina. Also acts as a regulator of migration of enteric neural crest cells (ENCCs) by activating PP1, leading to dephosphorylation and subsequent activation of cofilin (COF1 or COF2) and repression of the integrin signaling through the RHO/ROCK pathway. This chain is Phosphatase and actin regulator 4 (PHACTR4), found in Homo sapiens (Human).